A 333-amino-acid polypeptide reads, in one-letter code: Fructose-1,6-bisphosphatase class 1 (333 aa).

Mg(2+) is bound by residues Glu89, Asp112, Leu114, and Asp115. Substrate contacts are provided by residues Asp115–Ser118, Asn208, Tyr241, and Lys271. Mg(2+) is bound at residue Glu277.

This sequence belongs to the FBPase class 1 family. Homotetramer. Mg(2+) serves as cofactor.

The protein localises to the cytoplasm. It carries out the reaction beta-D-fructose 1,6-bisphosphate + H2O = beta-D-fructose 6-phosphate + phosphate. The protein operates within carbohydrate biosynthesis; gluconeogenesis. The polypeptide is Fructose-1,6-bisphosphatase class 1 (Haemophilus influenzae (strain ATCC 51907 / DSM 11121 / KW20 / Rd)).